Reading from the N-terminus, the 116-residue chain is Large ribosomal subunit protein bL17 (116 aa).

The protein belongs to the bacterial ribosomal protein bL17 family. As to quaternary structure, part of the 50S ribosomal subunit. Contacts protein L32.

The sequence is that of Large ribosomal subunit protein bL17 from Picosynechococcus sp. (strain ATCC 27264 / PCC 7002 / PR-6) (Agmenellum quadruplicatum).